The primary structure comprises 109 residues: uncharacterized protein (109 aa).

It is found in the mitochondrion. This is an uncharacterized protein from Marchantia polymorpha (Common liverwort).